The sequence spans 359 residues: N-acetylhexosamine 1-kinase (359 aa).

The Protein kinase domain maps to Val-21–Arg-359.

The protein belongs to the protein kinase superfamily. Requires Mg(2+) as cofactor.

The enzyme catalyses N-acetyl-D-hexosamine + ATP = N-acetyl-alpha-D-hexosamine 1-phosphate + ADP + H(+). Functionally, phosphorylates both N-acetylglucosamine (GlcNAc) and N-acetylgalactosamine (GalNAc) at similar rates. Involved in the lacto-N-biose I/galacto-N-biose (LNB/GNB) degradation pathway, which is important for host intestinal colonization by bifidobacteria. Also accepts GTP and ITP as phosphate donors. In vitro, can phosphorylate several GlcNAc and GalNAc derivatives. This chain is N-acetylhexosamine 1-kinase (nahK), found in Bifidobacterium longum subsp. longum (strain ATCC 15707 / DSM 20219 / JCM 1217 / NCTC 11818 / E194b).